The following is a 489-amino-acid chain: Pre-glycoprotein polyprotein GP complex (489 aa).

Glycine 2 is lipidated: N-myristoyl glycine; by host. Over 2-17 the chain is Extracellular; that stretch reads GQIVTFFQEVPHILEE. The chain crosses the membrane as a helical span at residues 18–33; that stretch reads VMNIVLMTLSILAILK. The Cytoplasmic segment spans residues 34 to 58; it reads GIYNVMTCGIIGLITFLFLCGRSCS. Position 57 (cysteine 57) interacts with Zn(2+). At 59 to 430 the chain is on the extracellular side; sequence SIYKDNYEFF…QSTTPLGLVD (372 aa). Asparagine 78, asparagine 88, asparagine 98, asparagine 108, asparagine 118, and asparagine 166 each carry an N-linked (GlcNAc...) asparagine; by host glycan. 6 cysteine pairs are disulfide-bonded: cysteine 85–cysteine 229, cysteine 117–cysteine 154, cysteine 179–cysteine 210, cysteine 277–cysteine 290, cysteine 299–cysteine 308, and cysteine 362–cysteine 383. A glycan (N-linked (GlcNAc...) asparagine; by host) is linked at asparagine 222. Asparagine 363, asparagine 371, asparagine 388, and asparagine 393 each carry an N-linked (GlcNAc...) asparagine; by host glycan. The chain crosses the membrane as a helical span at residues 431–451; the sequence is LFVFSTSFYLISVFLHLIKIP. At 452–489 the chain is on the cytoplasmic side; it reads THRHIKGKPCPKPHRLNHMAICSCGFYKQPGLPTQWKR. Positions 453, 455, 461, 465, 473, and 475 each coordinate Zn(2+).

This sequence belongs to the arenaviridae GPC protein family. Interacts with glycoprotein G2. Part of the GP complex (GP-C) together with glycoprotein G1 and glycoprotein G2. The GP-complex interacts with protein Z, which interacts with ribonucleocapsid; these interactions may induce virion budding. As to quaternary structure, homotrimer; disulfide-linked. In pre-fusion state, G1 homotrimers bind G2 homotrimers via ionic interactions. Part of the GP complex (GP-C) together with glycoprotein G2 and the stable signal peptide. The GP-complex interacts with protein Z, which interacts with ribonucleocapsid; these interactions may induce virion budding. In terms of assembly, homotrimer. Interacts with the stable signal peptide. In pre-fusion state, G2 homotrimers bind G1 homotrimers via ionic interactions. Part of the GP complex (GP-C) together with glycoprotein G1 and the stable signal peptide. Acidification in the endosome triggers rearrangements, which ultimately leads to a 6 helix bundle formed by the two heptad repeat domains (HR1 and HR2) in post-fusion state. The GP-complex interacts with protein Z, which interacts with ribonucleocapsid; these interactions may induce virion budding. Specific enzymatic cleavages in vivo yield mature proteins. GP-C polyprotein is cleaved in the endoplasmic reticulum by the host protease MBTPS1. Only cleaved glycoprotein is incorporated into virions. In terms of processing, the SSP remains stably associated with the GP complex following cleavage by signal peptidase and plays crucial roles in the trafficking of GP through the secretory pathway. Post-translationally, myristoylation is necessary for GP2-mediated fusion activity.

It localises to the virion membrane. Its subcellular location is the host endoplasmic reticulum membrane. It is found in the host Golgi apparatus membrane. The protein resides in the host cell membrane. Its function is as follows. Functions as a cleaved signal peptide that is retained as the third component of the GP complex (GP-C). Helps to stabilize the spike complex in its native conformation. The SSP is required for efficient glycoprotein expression, post-translational maturation cleavage of G1 and G2, glycoprotein transport to the cell surface plasma membrane, formation of infectious virus particles, and acid pH-dependent glycoprotein-mediated cell fusion. Functionally, forms the virion spikes together with glycoprotein G2. The glycoprotein spike trimers are connected to the underlying matrix. Interacts with the host receptor leading to virus endocytosis. Forms the virion spikes together with glycoprotein G1. The glycoprotein spike trimers are connected to the underlying matrix. Class I viral fusion protein that directs fusion of viral and host endosomal membranes, leading to delivery of the nucleocapsid into the cytoplasm. Membrane fusion is mediated by irreversible conformational changes induced by acidification. The chain is Pre-glycoprotein polyprotein GP complex from Mastomys natalensis (African soft-furred rat).